We begin with the raw amino-acid sequence, 435 residues long: D-inositol 3-phosphate glycosyltransferase (435 aa).

His-16 contacts 1D-myo-inositol 3-phosphate. UDP-N-acetyl-alpha-D-glucosamine is bound by residues 22 to 23 and Gly-30; that span reads QP. 1D-myo-inositol 3-phosphate is bound by residues 27–32, Lys-85, Tyr-118, Thr-142, and Arg-162; that span reads DAGGMN. 3 residues coordinate UDP-N-acetyl-alpha-D-glucosamine: Arg-237, Lys-242, and Val-303. Tyr-312, Arg-313, and Ala-315 together coordinate Mg(2+). Glu-325 and Glu-333 together coordinate UDP-N-acetyl-alpha-D-glucosamine. Thr-339 contributes to the Mg(2+) binding site.

The protein belongs to the glycosyltransferase group 1 family. MshA subfamily. In terms of assembly, homodimer.

The catalysed reaction is 1D-myo-inositol 3-phosphate + UDP-N-acetyl-alpha-D-glucosamine = 1D-myo-inositol 2-acetamido-2-deoxy-alpha-D-glucopyranoside 3-phosphate + UDP + H(+). Catalyzes the transfer of a N-acetyl-glucosamine moiety to 1D-myo-inositol 3-phosphate to produce 1D-myo-inositol 2-acetamido-2-deoxy-glucopyranoside 3-phosphate in the mycothiol biosynthesis pathway. The protein is D-inositol 3-phosphate glycosyltransferase of Kineococcus radiotolerans (strain ATCC BAA-149 / DSM 14245 / SRS30216).